The sequence spans 410 residues: Sensor histidine kinase GlnK (410 aa).

Topologically, residues 1–15 are extracellular; the sequence is MLITVPLAGELKFYP. The chain crosses the membrane as a helical span at residues 16–36; that stretch reads LNEEFRVSFGAPVFFFFLSLL. Residues 37–38 are Cytoplasmic-facing; it reads RH. A helical transmembrane segment spans residues 39–59; sequence VPAVLPGFLTGAAVFIFRVFL. Topologically, residues 60–71 are extracellular; sequence ELWGGGHNGLTP. The chain crosses the membrane as a helical span at residues 72–92; sequence ILYDQASGFFFYMTYACLFSI. Over 93-102 the chain is Cytoplasmic; that stretch reads LKANRFRERP. A helical transmembrane segment spans residues 103–123; it reads IMLGFIGFMIEVVSDCVELTV. Topologically, residues 124-139 are extracellular; it reads QFLIFHTVVTPEKITD. The chain crosses the membrane as a helical span at residues 140 to 160; it reads IAVIAISHTFIVMSFYSVLKL. Residues 161–410 are Cytoplasmic-facing; sequence YETQSREKQT…LPVRHLIQKG (250 aa). The 217-residue stretch at 189–405 folds into the Histidine kinase domain; that stretch reads VHLKKTLKTT…VFAIRLPVRH (217 aa). Phosphohistidine; by autocatalysis is present on H190.

As to quaternary structure, homotrimer. Under poor nitrogen source such as nitrate, the complex between GlnK and AmtB, which are the transmembrane ammonium transporter and its cognate regulator, respectively, interacts with TnrA. GlnK-ATP complex are not able to bind TnrA.

Its subcellular location is the cell membrane. It carries out the reaction ATP + protein L-histidine = ADP + protein N-phospho-L-histidine.. Functionally, member of the two-component regulatory system GlnK/GlnL that positively regulates the expression of the glsA-glnT operon in response to glutamine. It seems that autophosphorylated GlnK transfers a phosphoryl group to GlnL, which positively regulates the expression of the glsA-glnT operon. Interaction between GlnK-AmtB complex and TnrA protects TnrA from proteolytic degradation. The sequence is that of Sensor histidine kinase GlnK from Bacillus subtilis (strain 168).